The sequence spans 138 residues: Host cell factor C1 regulator 1 (138 aa).

Residues 76 to 79 (DHPY) form an interaction with HCFC1 region. Residues 110-119 (IPEALRLLRL) carry the Nuclear export signal motif.

In terms of assembly, interacts with HCFC1. In terms of tissue distribution, widely expressed.

Its subcellular location is the cytoplasm. It localises to the nucleus. Regulates HCFC1 activity by modulating its subcellular localization. Overexpression of HCFC1R1 leads to accumulation of HCFC1 in the cytoplasm. HCFC1R1-mediated export may provide the pool of cytoplasmic HCFC1 required for import of virion-derived VP16 into the nucleus. In Homo sapiens (Human), this protein is Host cell factor C1 regulator 1 (HCFC1R1).